We begin with the raw amino-acid sequence, 346 residues long: UDP-N-acetylenolpyruvoylglucosamine reductase (346 aa).

Residues 23–194 (FDVRARLACR…VSVTFRLPKV (172 aa)) enclose the FAD-binding PCMH-type domain. Arg-170 is a catalytic residue. Ser-246 (proton donor) is an active-site residue. Residue Glu-342 is part of the active site.

Belongs to the MurB family. Requires FAD as cofactor.

The protein resides in the cytoplasm. The catalysed reaction is UDP-N-acetyl-alpha-D-muramate + NADP(+) = UDP-N-acetyl-3-O-(1-carboxyvinyl)-alpha-D-glucosamine + NADPH + H(+). It functions in the pathway cell wall biogenesis; peptidoglycan biosynthesis. Its function is as follows. Cell wall formation. The sequence is that of UDP-N-acetylenolpyruvoylglucosamine reductase from Paraburkholderia phymatum (strain DSM 17167 / CIP 108236 / LMG 21445 / STM815) (Burkholderia phymatum).